We begin with the raw amino-acid sequence, 368 residues long: UDP-N-acetylglucosamine--N-acetylmuramyl-(pentapeptide) pyrophosphoryl-undecaprenol N-acetylglucosamine transferase (368 aa).

Residues 10–12 (TGG), asparagine 128, arginine 170, serine 199, isoleucine 250, and glutamine 295 contribute to the UDP-N-acetyl-alpha-D-glucosamine site.

The protein belongs to the glycosyltransferase 28 family. MurG subfamily.

The protein resides in the cell inner membrane. The catalysed reaction is di-trans,octa-cis-undecaprenyl diphospho-N-acetyl-alpha-D-muramoyl-L-alanyl-D-glutamyl-meso-2,6-diaminopimeloyl-D-alanyl-D-alanine + UDP-N-acetyl-alpha-D-glucosamine = di-trans,octa-cis-undecaprenyl diphospho-[N-acetyl-alpha-D-glucosaminyl-(1-&gt;4)]-N-acetyl-alpha-D-muramoyl-L-alanyl-D-glutamyl-meso-2,6-diaminopimeloyl-D-alanyl-D-alanine + UDP + H(+). Its pathway is cell wall biogenesis; peptidoglycan biosynthesis. Functionally, cell wall formation. Catalyzes the transfer of a GlcNAc subunit on undecaprenyl-pyrophosphoryl-MurNAc-pentapeptide (lipid intermediate I) to form undecaprenyl-pyrophosphoryl-MurNAc-(pentapeptide)GlcNAc (lipid intermediate II). This chain is UDP-N-acetylglucosamine--N-acetylmuramyl-(pentapeptide) pyrophosphoryl-undecaprenol N-acetylglucosamine transferase, found in Chlorobium phaeovibrioides (strain DSM 265 / 1930) (Prosthecochloris vibrioformis (strain DSM 265)).